The primary structure comprises 200 residues: Nucleoside triphosphate pyrophosphatase (200 aa).

D75 acts as the Proton acceptor in catalysis.

The protein belongs to the Maf family. A divalent metal cation is required as a cofactor.

The protein resides in the cytoplasm. The enzyme catalyses a ribonucleoside 5'-triphosphate + H2O = a ribonucleoside 5'-phosphate + diphosphate + H(+). It catalyses the reaction a 2'-deoxyribonucleoside 5'-triphosphate + H2O = a 2'-deoxyribonucleoside 5'-phosphate + diphosphate + H(+). Functionally, nucleoside triphosphate pyrophosphatase. May have a dual role in cell division arrest and in preventing the incorporation of modified nucleotides into cellular nucleic acids. The chain is Nucleoside triphosphate pyrophosphatase from Synechococcus sp. (strain CC9311).